Reading from the N-terminus, the 63-residue chain is Transmembrane protein 033R (63 aa).

The sequence is that of Transmembrane protein 033R from Dryophytes versicolor (chameleon treefrog).